Consider the following 450-residue polypeptide: Trigger factor (450 aa).

The 86-residue stretch at 161–246 folds into the PPIase FKBP-type domain; the sequence is GDRVVIDFKG…VKTVEAPEYP (86 aa). The disordered stretch occupies residues 422 to 450; the sequence is PMSLQELMSPQQPEAESAEGESKQDETKE. Positions 441–450 are enriched in basic and acidic residues; sequence GESKQDETKE.

Belongs to the FKBP-type PPIase family. Tig subfamily.

The protein resides in the cytoplasm. The catalysed reaction is [protein]-peptidylproline (omega=180) = [protein]-peptidylproline (omega=0). Involved in protein export. Acts as a chaperone by maintaining the newly synthesized protein in an open conformation. Functions as a peptidyl-prolyl cis-trans isomerase. This Alkalilimnicola ehrlichii (strain ATCC BAA-1101 / DSM 17681 / MLHE-1) protein is Trigger factor.